The primary structure comprises 100 residues: Replication restart protein PriB (100 aa).

The SSB domain maps to 1 to 99; that stretch reads MGFNNLVSLA…LRIQNIQEYK (99 aa).

The protein belongs to the PriB family. Homodimer. Interacts with PriA and DnaT. Component of the replication restart primosome. Primosome assembly occurs via a 'hand-off' mechanism. PriA binds to replication forks, subsequently PriB then DnaT bind; DnaT then displaces ssDNA to generate the helicase loading substrate.

Involved in the restart of stalled replication forks, which reloads the replicative helicase on sites other than the origin of replication; the PriA-PriB pathway is the major replication restart pathway. During primosome assembly it facilitates complex formation between PriA and DnaT on DNA; stabilizes PriA on DNA. Stimulates the DNA unwinding activity of PriA helicase. The sequence is that of Replication restart protein PriB from Neisseria meningitidis serogroup B (strain ATCC BAA-335 / MC58).